An 822-amino-acid chain; its full sequence is Ribonucleoside-diphosphate reductase large subunit (822 aa).

Residues Thr249, 264–265, Gly295, 470–474, and 651–655 contribute to the substrate site; these read SC, NLCTE, and PTAAS. Cys265 and Cys487 are joined by a disulfide. Catalysis depends on Asn470, which acts as the Proton acceptor. Cys472 serves as the catalytic Cysteine radical intermediate. The Proton acceptor role is filled by Glu474.

The protein belongs to the ribonucleoside diphosphate reductase large chain family. Heterotetramer composed of a homodimer of the large subunit (R1) and a homodimer of the small subunit (R2). Larger multisubunit protein complex are also active, composed of (R1)n(R2)n.

The enzyme catalyses a 2'-deoxyribonucleoside 5'-diphosphate + [thioredoxin]-disulfide + H2O = a ribonucleoside 5'-diphosphate + [thioredoxin]-dithiol. Ribonucleoside-diphosphate reductase holoenzyme provides the precursors necessary for viral DNA synthesis. Allows virus growth in non-dividing cells, as well as reactivation from latency in infected hosts. Catalyzes the biosynthesis of deoxyribonucleotides from the corresponding ribonucleotides. The sequence is that of Ribonucleoside-diphosphate reductase large subunit from Gallus gallus (Chicken).